A 363-amino-acid polypeptide reads, in one-letter code: tRNA-specific 2-thiouridylase MnmA (363 aa).

Residues 8–15 (AMSGGVDS) and leucine 34 contribute to the ATP site. Cysteine 103 (nucleophile) is an active-site residue. Cysteine 103 and cysteine 195 form a disulfide bridge. Glycine 127 contributes to the ATP binding site. Residues 145-147 (KDQ) are interaction with tRNA. Cysteine 195 acts as the Cysteine persulfide intermediate in catalysis.

Belongs to the MnmA/TRMU family.

Its subcellular location is the cytoplasm. It catalyses the reaction S-sulfanyl-L-cysteinyl-[protein] + uridine(34) in tRNA + AH2 + ATP = 2-thiouridine(34) in tRNA + L-cysteinyl-[protein] + A + AMP + diphosphate + H(+). In terms of biological role, catalyzes the 2-thiolation of uridine at the wobble position (U34) of tRNA, leading to the formation of s(2)U34. This is tRNA-specific 2-thiouridylase MnmA from Thermobifida fusca (strain YX).